The chain runs to 213 residues: Adenylate kinase (213 aa).

Position 14-19 (14-19) interacts with ATP; sequence GSGKGT. The NMP stretch occupies residues 34–63; it reads SSGNLLRSAIKASTPLGIKASEYIDEGQLV. AMP-binding positions include S35, R40, 61–63, 89–92, and Q96; these read QLV and GFPR. The segment at 129–162 is LID; that stretch reads SRFICPSCNFVYNQSQGFRECPTCHSELVRRSDD. R130 provides a ligand contact to ATP. The Zn(2+) site is built by C133 and C136. 139-140 contributes to the ATP binding site; sequence VY. Residues C149 and C152 each contribute to the Zn(2+) site. AMP is bound by residues R159 and R170. K198 contributes to the ATP binding site.

Belongs to the adenylate kinase family. Monomer.

Its subcellular location is the cytoplasm. The enzyme catalyses AMP + ATP = 2 ADP. It functions in the pathway purine metabolism; AMP biosynthesis via salvage pathway; AMP from ADP: step 1/1. In terms of biological role, catalyzes the reversible transfer of the terminal phosphate group between ATP and AMP. Plays an important role in cellular energy homeostasis and in adenine nucleotide metabolism. This Chlamydia felis (strain Fe/C-56) (Chlamydophila felis) protein is Adenylate kinase.